The primary structure comprises 315 residues: MPGGRNSTVITKFILVGFSDFPKLKLVLFVIFLGSYLSTVVWNLGLIILIRIDPYLHTPMYFFLSNLSFLDFCYISSTTPKMLSGFFQKSKSISFVGCTMQYFIFSSLGLSECCLLAAMAYDRYAAICNPLLYTAIMSPSLCVHMVVGAYSTGLLGSLIQLCAILQLHFCGPNIINHFFCDLPQLLVLSCSETFPLQVLKFVIAVIFGVASVIVILISYGYIIGTILNISSVEGRSKAFNTCASHLTAVTLFFGSGLFVYMRPSSNSSQGYDKMASVFYTVVIPMLNPLIYSLRNKEIKDALQRCKNKCFSQCHC.

At 1 to 29 (MPGGRNSTVITKFILVGFSDFPKLKLVLF) the chain is on the extracellular side. A helical transmembrane segment spans residues 30 to 50 (VIFLGSYLSTVVWNLGLIILI). Topologically, residues 51–54 (RIDP) are cytoplasmic. The chain crosses the membrane as a helical span at residues 55 to 75 (YLHTPMYFFLSNLSFLDFCYI). Over 76–99 (SSTTPKMLSGFFQKSKSISFVGCT) the chain is Extracellular. Cysteines 98 and 180 form a disulfide. The helical transmembrane segment at 100–120 (MQYFIFSSLGLSECCLLAAMA) threads the bilayer. Residues 121-123 (YDR) lie on the Cytoplasmic side of the membrane. A helical transmembrane segment spans residues 124-143 (YAAICNPLLYTAIMSPSLCV). Position 144 (His144) is a topological domain, extracellular. The helical transmembrane segment at 145–165 (MVVGAYSTGLLGSLIQLCAIL) threads the bilayer. The Cytoplasmic segment spans residues 166–202 (QLHFCGPNIINHFFCDLPQLLVLSCSETFPLQVLKFV). Residues 203–223 (IAVIFGVASVIVILISYGYII) form a helical membrane-spanning segment. At 224–240 (GTILNISSVEGRSKAFN) the chain is on the extracellular side. A helical membrane pass occupies residues 241–261 (TCASHLTAVTLFFGSGLFVYM). Residues 262–272 (RPSSNSSQGYD) are Cytoplasmic-facing. Residues 273–293 (KMASVFYTVVIPMLNPLIYSL) form a helical membrane-spanning segment. At 294 to 315 (RNKEIKDALQRCKNKCFSQCHC) the chain is on the extracellular side.

This sequence belongs to the G-protein coupled receptor 1 family. Localized in the dorsomedial and ventral region of the olfactory bulb.

Its subcellular location is the cell membrane. Its function is as follows. Odorant receptor specific for muscone. Muscone-binding causes a conformation change that triggers signaling via G(s)-class of G alpha protein GNAL, activating adenylyl cyclase. The sequence is that of Olfactory receptor 5AN6 from Mus musculus (Mouse).